The chain runs to 192 residues: Anthranilate synthase component 2 (192 aa).

Positions 1–192 constitute a Glutamine amidotransferase type-1 domain; that stretch reads MIVLVNNRDS…KNFVEMSRNG (192 aa). Position 50-52 (50-52) interacts with L-glutamine; sequence GPG. Cysteine 78 functions as the Nucleophile; for GATase activity in the catalytic mechanism. Residues glutamine 82 and 127–128 contribute to the L-glutamine site; that span reads SL. Active-site for GATase activity residues include histidine 165 and glutamate 167.

In terms of assembly, heterotetramer consisting of two non-identical subunits: a beta subunit (TrpG) and a large alpha subunit (TrpE).

The catalysed reaction is chorismate + L-glutamine = anthranilate + pyruvate + L-glutamate + H(+). It functions in the pathway amino-acid biosynthesis; L-tryptophan biosynthesis; L-tryptophan from chorismate: step 1/5. Part of a heterotetrameric complex that catalyzes the two-step biosynthesis of anthranilate, an intermediate in the biosynthesis of L-tryptophan. In the first step, the glutamine-binding beta subunit (TrpG) of anthranilate synthase (AS) provides the glutamine amidotransferase activity which generates ammonia as a substrate that, along with chorismate, is used in the second step, catalyzed by the large alpha subunit of AS (TrpE) to produce anthranilate. In the absence of TrpG, TrpE can synthesize anthranilate directly from chorismate and high concentrations of ammonia. The sequence is that of Anthranilate synthase component 2 (trpG) from Thermococcus kodakarensis (strain ATCC BAA-918 / JCM 12380 / KOD1) (Pyrococcus kodakaraensis (strain KOD1)).